The following is a 252-amino-acid chain: 5-oxoprolinase subunit A (252 aa).

This sequence belongs to the LamB/PxpA family. In terms of assembly, forms a complex composed of PxpA, PxpB and PxpC.

The enzyme catalyses 5-oxo-L-proline + ATP + 2 H2O = L-glutamate + ADP + phosphate + H(+). Its function is as follows. Catalyzes the cleavage of 5-oxoproline to form L-glutamate coupled to the hydrolysis of ATP to ADP and inorganic phosphate. This is 5-oxoprolinase subunit A from Staphylococcus carnosus (strain TM300).